Consider the following 474-residue polypeptide: Ribulose bisphosphate carboxylase large chain (474 aa).

Residues Asn-122 and Thr-172 each contribute to the substrate site. Lys-174 functions as the Proton acceptor in the catalytic mechanism. Lys-176 contributes to the substrate binding site. Lys-200, Asp-202, and Glu-203 together coordinate Mg(2+). At Lys-200 the chain carries N6-carboxylysine. The Proton acceptor role is filled by His-293. Substrate-binding residues include Arg-294, His-326, and Ser-378.

Belongs to the RuBisCO large chain family. Type I subfamily. As to quaternary structure, heterohexadecamer of 8 large chains and 8 small chains; disulfide-linked. The disulfide link is formed within the large subunit homodimers. The cofactor is Mg(2+). Post-translationally, the disulfide bond which can form in the large chain dimeric partners within the hexadecamer appears to be associated with oxidative stress and protein turnover.

The protein localises to the carboxysome. It carries out the reaction 2 (2R)-3-phosphoglycerate + 2 H(+) = D-ribulose 1,5-bisphosphate + CO2 + H2O. The enzyme catalyses D-ribulose 1,5-bisphosphate + O2 = 2-phosphoglycolate + (2R)-3-phosphoglycerate + 2 H(+). Functionally, ruBisCO catalyzes two reactions: the carboxylation of D-ribulose 1,5-bisphosphate, the primary event in carbon dioxide fixation, as well as the oxidative fragmentation of the pentose substrate in the photorespiration process. Both reactions occur simultaneously and in competition at the same active site. This chain is Ribulose bisphosphate carboxylase large chain, found in Gloeobacter violaceus (strain ATCC 29082 / PCC 7421).